The primary structure comprises 173 residues: Probable lipoprotein EnvE (173 aa).

The N-terminal stretch at 1–20 (MTLLSGKTTLVLCLSSILCG) is a signal peptide. A lipid anchor (N-palmitoyl cysteine) is attached at C21. The S-diacylglycerol cysteine moiety is linked to residue C21.

The protein localises to the cell membrane. This is Probable lipoprotein EnvE (envE) from Salmonella typhimurium (strain LT2 / SGSC1412 / ATCC 700720).